Here is a 399-residue protein sequence, read N- to C-terminus: 1-deoxy-D-xylulose 5-phosphate reductoisomerase (399 aa).

NADPH-binding residues include Thr13, Gly14, Ser15, Ile16, and Asn127. Position 128 (Lys128) interacts with 1-deoxy-D-xylulose 5-phosphate. Glu129 lines the NADPH pocket. Asp153 provides a ligand contact to Mn(2+). Residues Ser154, Glu155, Ser187, and His210 each coordinate 1-deoxy-D-xylulose 5-phosphate. Glu155 is a Mn(2+) binding site. NADPH is bound at residue Gly216. 4 residues coordinate 1-deoxy-D-xylulose 5-phosphate: Ser223, Asn228, Lys229, and Glu232. Glu232 provides a ligand contact to Mn(2+).

Belongs to the DXR family. Mg(2+) serves as cofactor. Requires Mn(2+) as cofactor.

The enzyme catalyses 2-C-methyl-D-erythritol 4-phosphate + NADP(+) = 1-deoxy-D-xylulose 5-phosphate + NADPH + H(+). Its pathway is isoprenoid biosynthesis; isopentenyl diphosphate biosynthesis via DXP pathway; isopentenyl diphosphate from 1-deoxy-D-xylulose 5-phosphate: step 1/6. Functionally, catalyzes the NADPH-dependent rearrangement and reduction of 1-deoxy-D-xylulose-5-phosphate (DXP) to 2-C-methyl-D-erythritol 4-phosphate (MEP). The polypeptide is 1-deoxy-D-xylulose 5-phosphate reductoisomerase (Bordetella petrii (strain ATCC BAA-461 / DSM 12804 / CCUG 43448)).